The following is a 1380-amino-acid chain: MSSSVTSKYVLNSFSSVPRLSYAKSIDIKDSLTDLIKIQRDSYNAFIGIDQDVDSGIKNIFQSMFPIQDLLGRAVLQFVSYSIGEPQYDEYECIKRGITYSVPIRIVLRFIVWKVQEVSFKEVKYVVDEETSEKSIKYIKEQEVSIGDLPTMTSYGTFIINGVERVIVSQMHRSPGVFFDSDKGKTYSSGKLIYLARIIPYRGSWLDFEFDIKDILYFRIDRKRKLPVSLLLRALGLSNSEILDTFYDKIRYERCENGWVVPFVVDRFRGVRLSYDLVDIDGNVLVKANTRITLRLAKKLASDGLKKYLVPFAEIQGLFIANDLVDPASNVMIMCAGESITSEHINKLKLFDINEIFILNIDFLTVGPYILNTLFLDKNISYEDALFEIYKVLRSGESPSLDTMKAFFDGLFFEKERYDLSTVGRIKLNDHLGLDISEDVTVLTKDDIIHVIKKLVLLRDGEGFVDDIDHLGNRRVRSVGEFIENQFRIGILRLERMIMDYMSSVNFDNAMPCDFVNPKVLATVLKDFFSSSQLSQFMDQTNPLSEVTHKRRLSALGPGGLTRERAGFEVRDVHPTHYGRICPIETPEGQNIGLISSLAIYARINKHGFIESPYRKVDNGIVTDKVEYLLAMQESNYYIADASATLDENNRFVDDMLYCRHDGNFVMVKREQVDYIDVSPKQIVSVAASLIPFLENNDANRALMGSNMQRQAVPLLKADAPLVGTGMESIVAAGSGTVVLAKRSGIVHRVDGLYIVIRAFDKEKNEYLGVDIYNLRKFQRSNHNTCINQKPLVKPGDYVRENDVIADGSAIDQGELALGKNVLVAFMSWQGYNFEDSIVISSEVVKKDVFTSIHIEEFECVVRDTALGPEKIMRSIPDVNEDSLSHLDDVGIVNVGAEVSAGDILVGKVTPRPPVSLPPETKLLVTIFGEKVFDCVDSSLYLPIDVEGTVVDVHVFVRRGVEENDRSLLIKQNEINGFIKERDYEIDVVSEYFYDELKRVLVNTNTEYNNQNIEDYLKSIPQKSWWDIKLSDESVLSQISDLKEKFDSMIENAHSKFDQKIDKLNYGYDLPQGVLCIVKVFVAVKHNLQPGDKMAGRHGNKGVISRIVPVEDMPYLEDGTPVDIILNSLGVPSRMNVGQILETHLGWASVNLGKKIGNILDNIDELTIAHLRNFLDQVYDGQDLKYSIRSMSDDDLLAFAERLRDGVPMAAPVFEGPKDNQISNLLKLADLDVSGQVDLYDGRIGEKFDRKVTVGYIYMLKLHHLVDDKIHARSVGPYGLVTQQPLGGKSHFGGQRFGEMECWALQAYGAAYTLQEMLTVKSDDIVGRVKIYESIIKGDSNFECGIPESFNVMVKELRSLCLDVALKQDKDFLHDRKINN.

This sequence belongs to the RNA polymerase beta chain family. The RNAP catalytic core consists of 2 alpha, 1 beta, 1 beta' and 1 omega subunit. When a sigma factor is associated with the core the holoenzyme is formed, which can initiate transcription.

It carries out the reaction RNA(n) + a ribonucleoside 5'-triphosphate = RNA(n+1) + diphosphate. Functionally, DNA-dependent RNA polymerase catalyzes the transcription of DNA into RNA using the four ribonucleoside triphosphates as substrates. The sequence is that of DNA-directed RNA polymerase subunit beta from Ehrlichia ruminantium (strain Gardel).